A 90-amino-acid chain; its full sequence is Probable Fe(2+)-trafficking protein (90 aa).

It belongs to the Fe(2+)-trafficking protein family.

In terms of biological role, could be a mediator in iron transactions between iron acquisition and iron-requiring processes, such as synthesis and/or repair of Fe-S clusters in biosynthetic enzymes. In Pseudoalteromonas translucida (strain TAC 125), this protein is Probable Fe(2+)-trafficking protein.